We begin with the raw amino-acid sequence, 133 residues long: Small ribosomal subunit protein uS9 (133 aa).

The interval 101–133 is disordered; the sequence is MKPKGLLTRDPREVERKKYGLKKARRAPQFSKR. The span at 107 to 118 shows a compositional bias: basic and acidic residues; the sequence is LTRDPREVERKK. Residues 119 to 133 show a composition bias toward basic residues; that stretch reads YGLKKARRAPQFSKR.

Belongs to the universal ribosomal protein uS9 family.

The polypeptide is Small ribosomal subunit protein uS9 (Deinococcus radiodurans (strain ATCC 13939 / DSM 20539 / JCM 16871 / CCUG 27074 / LMG 4051 / NBRC 15346 / NCIMB 9279 / VKM B-1422 / R1)).